The primary structure comprises 126 residues: Small ribosomal subunit protein uS13c (126 aa).

Positions 95–126 (GLPLRGQNTRTNARTKRGIKKTMAGKKKAPRK) are disordered. Residues 107–126 (ARTKRGIKKTMAGKKKAPRK) are compositionally biased toward basic residues.

This sequence belongs to the universal ribosomal protein uS13 family. In terms of assembly, part of the 30S ribosomal subunit.

Its subcellular location is the plastid. The protein localises to the chloroplast. In terms of biological role, located at the top of the head of the 30S subunit, it contacts several helices of the 16S rRNA. This Gracilaria tenuistipitata var. liui (Red alga) protein is Small ribosomal subunit protein uS13c.